A 154-amino-acid chain; its full sequence is Putative pre-16S rRNA nuclease (154 aa).

This sequence belongs to the YqgF nuclease family.

It is found in the cytoplasm. Its function is as follows. Could be a nuclease involved in processing of the 5'-end of pre-16S rRNA. In Rickettsia conorii (strain ATCC VR-613 / Malish 7), this protein is Putative pre-16S rRNA nuclease.